Here is a 183-residue protein sequence, read N- to C-terminus: Large ribosomal subunit protein uL6 (183 aa).

The protein belongs to the universal ribosomal protein uL6 family. Part of the 50S ribosomal subunit.

Functionally, this protein binds to the 23S rRNA, and is important in its secondary structure. It is located near the subunit interface in the base of the L7/L12 stalk, and near the tRNA binding site of the peptidyltransferase center. The sequence is that of Large ribosomal subunit protein uL6 from Chlamydia trachomatis serovar L2 (strain ATCC VR-902B / DSM 19102 / 434/Bu).